Here is a 220-residue protein sequence, read N- to C-terminus: Redox-sensing transcriptional repressor Rex (220 aa).

The segment at residues 25–64 (WYLSNVKLLKQRGERFVSSTQISKEINIDASQIAKDLSYV) is a DNA-binding region (H-T-H motif). An NAD(+)-binding site is contributed by 99–104 (GVGSLG).

The protein belongs to the transcriptional regulatory Rex family. In terms of assembly, homodimer.

It is found in the cytoplasm. In terms of biological role, modulates transcription in response to changes in cellular NADH/NAD(+) redox state. In Bacteroides thetaiotaomicron (strain ATCC 29148 / DSM 2079 / JCM 5827 / CCUG 10774 / NCTC 10582 / VPI-5482 / E50), this protein is Redox-sensing transcriptional repressor Rex.